The chain runs to 148 residues: FAD synthase (148 aa).

ATP contacts are provided by residues 14–15, 19–22, and aspartate 97; these read TF and HPGH.

Belongs to the archaeal FAD synthase family. As to quaternary structure, homodimer. It depends on a divalent metal cation as a cofactor.

The catalysed reaction is FMN + ATP + H(+) = FAD + diphosphate. It functions in the pathway cofactor biosynthesis; FAD biosynthesis; FAD from FMN: step 1/1. Its function is as follows. Catalyzes the transfer of the AMP portion of ATP to flavin mononucleotide (FMN) to produce flavin adenine dinucleotide (FAD) coenzyme. In Natrialba magadii (strain ATCC 43099 / DSM 3394 / CCM 3739 / CIP 104546 / IAM 13178 / JCM 8861 / NBRC 102185 / NCIMB 2190 / MS3) (Natronobacterium magadii), this protein is FAD synthase.